The following is a 70-amino-acid chain: MPGIKVREGDAFDEAYRRFKKQTDRNLVVTECRARRFFESKTEKRKKQKISAKKEVLKRLYMLRRYESRL.

This sequence belongs to the bacterial ribosomal protein bS21 family.

This chain is Small ribosomal subunit protein bS21 (rpsU), found in Helicobacter pylori (strain J99 / ATCC 700824) (Campylobacter pylori J99).